The chain runs to 419 residues: Gamma-glutamyl phosphate reductase (419 aa).

It belongs to the gamma-glutamyl phosphate reductase family.

Its subcellular location is the cytoplasm. It catalyses the reaction L-glutamate 5-semialdehyde + phosphate + NADP(+) = L-glutamyl 5-phosphate + NADPH + H(+). It participates in amino-acid biosynthesis; L-proline biosynthesis; L-glutamate 5-semialdehyde from L-glutamate: step 2/2. In terms of biological role, catalyzes the NADPH-dependent reduction of L-glutamate 5-phosphate into L-glutamate 5-semialdehyde and phosphate. The product spontaneously undergoes cyclization to form 1-pyrroline-5-carboxylate. This Gloeobacter violaceus (strain ATCC 29082 / PCC 7421) protein is Gamma-glutamyl phosphate reductase.